The following is a 325-amino-acid chain: Elongation factor P--(R)-beta-lysine ligase (325 aa).

76–78 (SPE) contributes to the substrate binding site. ATP-binding positions include 100–102 (RNE) and asparagine 109. Position 118 (tyrosine 118) interacts with substrate. ATP is bound at residue 244-245 (EL). Glutamate 251 contributes to the substrate binding site. Glycine 300 contacts ATP.

This sequence belongs to the class-II aminoacyl-tRNA synthetase family. EpmA subfamily. In terms of assembly, homodimer.

It carries out the reaction D-beta-lysine + L-lysyl-[protein] + ATP = N(6)-((3R)-3,6-diaminohexanoyl)-L-lysyl-[protein] + AMP + diphosphate + H(+). Its function is as follows. With EpmB is involved in the beta-lysylation step of the post-translational modification of translation elongation factor P (EF-P) on 'Lys-34'. Catalyzes the ATP-dependent activation of (R)-beta-lysine produced by EpmB, forming a lysyl-adenylate, from which the beta-lysyl moiety is then transferred to the epsilon-amino group of EF-P 'Lys-34'. In Salmonella dublin (strain CT_02021853), this protein is Elongation factor P--(R)-beta-lysine ligase.